The chain runs to 210 residues: Small ribosomal subunit protein eS8y (210 aa).

The tract at residues 1 to 22 (MGISRDSIHKRRATGGKQKMWR) is disordered. A compositionally biased stretch (basic residues) spans 8–22 (IHKRRATGGKQKMWR).

This sequence belongs to the eukaryotic ribosomal protein eS8 family.

In Arabidopsis thaliana (Mouse-ear cress), this protein is Small ribosomal subunit protein eS8y (RPS8B).